Consider the following 350-residue polypeptide: Beta-ketoacyl-[acyl-carrier-protein] synthase III (350 aa).

Active-site residues include cysteine 120 and histidine 256. Positions 257–261 are ACP-binding; that stretch reads QANVR. The active site involves asparagine 286.

Belongs to the thiolase-like superfamily. FabH family. Homodimer.

It localises to the cytoplasm. It carries out the reaction malonyl-[ACP] + acetyl-CoA + H(+) = 3-oxobutanoyl-[ACP] + CO2 + CoA. It participates in lipid metabolism; fatty acid biosynthesis. Its function is as follows. Catalyzes the condensation reaction of fatty acid synthesis by the addition to an acyl acceptor of two carbons from malonyl-ACP. Catalyzes the first condensation reaction which initiates fatty acid synthesis and may therefore play a role in governing the total rate of fatty acid production. Possesses both acetoacetyl-ACP synthase and acetyl transacylase activities. Its substrate specificity determines the biosynthesis of branched-chain and/or straight-chain of fatty acids. This Deinococcus deserti (strain DSM 17065 / CIP 109153 / LMG 22923 / VCD115) protein is Beta-ketoacyl-[acyl-carrier-protein] synthase III.